We begin with the raw amino-acid sequence, 20 residues long: Thylakoid lumenal 14.7 kDa protein (20 aa).

A disordered region spans residues 1-20 (KTGVNKPELLPKEETTVIDV). Basic and acidic residues predominate over residues 9–20 (LLPKEETTVIDV).

The protein resides in the plastid. It is found in the chloroplast thylakoid lumen. The sequence is that of Thylakoid lumenal 14.7 kDa protein from Spinacia oleracea (Spinach).